The sequence spans 206 residues: Large ribosomal subunit protein uL4 (206 aa).

Residues Asn47–Asp94 are disordered. A compositionally biased stretch (basic and acidic residues) spans Ala49 to Lys58. The segment covering Ser59 to Ala74 has biased composition (basic residues).

This sequence belongs to the universal ribosomal protein uL4 family. As to quaternary structure, part of the 50S ribosomal subunit.

Its function is as follows. One of the primary rRNA binding proteins, this protein initially binds near the 5'-end of the 23S rRNA. It is important during the early stages of 50S assembly. It makes multiple contacts with different domains of the 23S rRNA in the assembled 50S subunit and ribosome. Functionally, forms part of the polypeptide exit tunnel. In Laribacter hongkongensis (strain HLHK9), this protein is Large ribosomal subunit protein uL4.